Here is a 584-residue protein sequence, read N- to C-terminus: Pescadillo homolog (584 aa).

A required for 28S ribosomal RNA processing region spans residues 1-54 (MGGLEKKKYERGSATNYITRNKARKKLQLSLPDFRRLCILKGIYPHEPKHKKKV). Positions 1–257 (MGGLEKKKYE…PKLEGQAQAE (257 aa)) are sufficient for nucleolar localization. At K98 the chain carries N6-acetyllysine. Positions 312 to 414 (RKKELEAQEK…LLLPVAEYFP (103 aa)) are sufficient for interaction with MAP1B. The BRCT domain occupies 321–414 (KHKKLFEGLK…LLLPVAEYFP (94 aa)). The interval 449–510 (DPGHLEEEEE…EEKKPQVMAG (62 aa)) is disordered. Residues 454 to 489 (EEEEEEDEDDDNEGDVAAENEEEDVEVESEEEEEEE) show a composition bias toward acidic residues. Over residues 496–505 (EQHRLEEKKP) the composition is skewed to basic and acidic residues. K513 is covalently cross-linked (Glycyl lysine isopeptide (Lys-Gly) (interchain with G-Cter in SUMO1); alternate). A Glycyl lysine isopeptide (Lys-Gly) (interchain with G-Cter in SUMO2); alternate cross-link involves residue K513. The tract at residues 535 to 584 (MMKKREKYLYQKIMFGKRRKIREANKLAEKRKAHDDAVRSEKKAKRTRPV) is required for 28S ribosomal RNA processing. Positions 560–575 (KLAEKRKAHDDAVRSE) are enriched in basic and acidic residues. A disordered region spans residues 560–584 (KLAEKRKAHDDAVRSEKKAKRTRPV).

It belongs to the pescadillo family. As to quaternary structure, component of the PeBoW complex, composed of BOP1, PES1 and WDR12. The complex is held together by BOP1, which interacts with PES1 via its N-terminal domain and with WDR12 via a high-affinity interaction between the seven-bladed beta-propeller domains of the 2 proteins. The PeBoW complex associates with the 66S pre-ribosome. The PeBoW complex also associates with DDX27, PES1 interacts directly with DDX27. Interacts with IRS1 and UBTF. May interact with MAP1B. In terms of processing, sumoylated. In terms of tissue distribution, ubiquitous. Highest levels appear to be found in tissues that contain a population of proliferating cells, such as ovary and testis. Also appears to be highly expressed in kidney and liver. In the brain expression is restricted to neural progenitor cells and postmitotic neurons. Highly expressed in malignant astrocytes.

The protein localises to the nucleus. It is found in the nucleolus. It localises to the nucleoplasm. The protein resides in the chromosome. Its function is as follows. Component of the PeBoW complex, which is required for maturation of 28S and 5.8S ribosomal RNAs and formation of the 60S ribosome. This Mus musculus (Mouse) protein is Pescadillo homolog (Pes1).